The following is a 143-amino-acid chain: Peptidyl-prolyl cis-trans isomerase B (143 aa).

In terms of domain architecture, PPIase cyclophilin-type spans 1–143 (MKTGYFLLED…DVMKEVRVEG (143 aa)).

This sequence belongs to the cyclophilin-type PPIase family.

The protein localises to the cytoplasm. The catalysed reaction is [protein]-peptidylproline (omega=180) = [protein]-peptidylproline (omega=0). Its activity is regulated as follows. Inhibited by cyclosporin A (CsA). Functionally, PPIases accelerate the folding of proteins. It catalyzes the cis-trans isomerization of proline imidic peptide bonds in oligopeptides. The protein is Peptidyl-prolyl cis-trans isomerase B (ppiB) of Bacillus subtilis (strain 168).